Here is a 333-residue protein sequence, read N- to C-terminus: MKKIAVDAMGGDFAPQSVVEGVEKARNKYPDLRFMLFGDEQKIREILTSDKNIEIIQTTEVIDMNDEPVKAIRRKKDSSLVRAAYAVKEGKADALFSCGNTGALLAAGLLIVGRIKGITRPGLLSTLPVLTKEGGAFNLLDSGANADNKPEQLYQYALLGKYYAESVRNIKNPRIGLLNNGTEPHKGSKLTLEAHNLIAADSSINFVGNVESKDILKGVCDVVVADGFTGNAVLKAIEGTAGTAMHLLKDTIMSAGLLGKIGGLLLKPSIMKIRNKMSASQYGGAVLLGAKAPVVKAHGASDAETVYYTVKQINDMLENDMLSKFTDYFNKNV.

It belongs to the PlsX family. As to quaternary structure, homodimer. Probably interacts with PlsY.

The protein resides in the cytoplasm. The catalysed reaction is a fatty acyl-[ACP] + phosphate = an acyl phosphate + holo-[ACP]. Its pathway is lipid metabolism; phospholipid metabolism. In terms of biological role, catalyzes the reversible formation of acyl-phosphate (acyl-PO(4)) from acyl-[acyl-carrier-protein] (acyl-ACP). This enzyme utilizes acyl-ACP as fatty acyl donor, but not acyl-CoA. This Ligilactobacillus salivarius (strain UCC118) (Lactobacillus salivarius) protein is Phosphate acyltransferase.